Here is a 328-residue protein sequence, read N- to C-terminus: Methionine import ATP-binding protein MetN 1 (328 aa).

The 240-residue stretch at 2 to 241 (ISIERLSKTY…PLSRLGRSLL (240 aa)) folds into the ABC transporter domain. An ATP-binding site is contributed by 38 to 45 (GRSGAGKS).

This sequence belongs to the ABC transporter superfamily. Methionine importer (TC 3.A.1.24) family. As to quaternary structure, the complex is composed of two ATP-binding proteins (MetN), two transmembrane proteins (MetI) and a solute-binding protein (MetQ).

The protein localises to the cell inner membrane. The enzyme catalyses L-methionine(out) + ATP + H2O = L-methionine(in) + ADP + phosphate + H(+). It carries out the reaction D-methionine(out) + ATP + H2O = D-methionine(in) + ADP + phosphate + H(+). Functionally, part of the ABC transporter complex MetNIQ involved in methionine import. Responsible for energy coupling to the transport system. In Yersinia pestis bv. Antiqua (strain Nepal516), this protein is Methionine import ATP-binding protein MetN 1.